The primary structure comprises 565 residues: Dihydroxy-acid dehydratase (565 aa).

Residue Asp80 coordinates Mg(2+). Cys121 is a binding site for [2Fe-2S] cluster. Residues Asp122 and Lys123 each coordinate Mg(2+). Lys123 is modified (N6-carboxylysine). Residue Cys194 coordinates [2Fe-2S] cluster. Position 447 (Glu447) interacts with Mg(2+). Ser473 acts as the Proton acceptor in catalysis.

It belongs to the IlvD/Edd family. In terms of assembly, homodimer. [2Fe-2S] cluster is required as a cofactor. It depends on Mg(2+) as a cofactor.

The enzyme catalyses (2R)-2,3-dihydroxy-3-methylbutanoate = 3-methyl-2-oxobutanoate + H2O. It catalyses the reaction (2R,3R)-2,3-dihydroxy-3-methylpentanoate = (S)-3-methyl-2-oxopentanoate + H2O. Its pathway is amino-acid biosynthesis; L-isoleucine biosynthesis; L-isoleucine from 2-oxobutanoate: step 3/4. It functions in the pathway amino-acid biosynthesis; L-valine biosynthesis; L-valine from pyruvate: step 3/4. Functionally, functions in the biosynthesis of branched-chain amino acids. Catalyzes the dehydration of (2R,3R)-2,3-dihydroxy-3-methylpentanoate (2,3-dihydroxy-3-methylvalerate) into 2-oxo-3-methylpentanoate (2-oxo-3-methylvalerate) and of (2R)-2,3-dihydroxy-3-methylbutanoate (2,3-dihydroxyisovalerate) into 2-oxo-3-methylbutanoate (2-oxoisovalerate), the penultimate precursor to L-isoleucine and L-valine, respectively. The protein is Dihydroxy-acid dehydratase of Chlorobium phaeovibrioides (strain DSM 265 / 1930) (Prosthecochloris vibrioformis (strain DSM 265)).